A 180-amino-acid polypeptide reads, in one-letter code: NAD(P)H-quinone oxidoreductase subunit I, chloroplastic (180 aa).

4Fe-4S ferredoxin-type domains are found at residues 55–84 (GRIHFELDKCIACEVCVRVCPIDLPVVDWR) and 95–124 (LNYSIDFGICIFCGNCVEYCPTNCLSMTEE). Positions 64, 67, 70, 74, 104, 107, 110, and 114 each coordinate [4Fe-4S] cluster.

It belongs to the complex I 23 kDa subunit family. NDH is composed of at least 16 different subunits, 5 of which are encoded in the nucleus. The cofactor is [4Fe-4S] cluster.

Its subcellular location is the plastid. The protein resides in the chloroplast thylakoid membrane. It catalyses the reaction a plastoquinone + NADH + (n+1) H(+)(in) = a plastoquinol + NAD(+) + n H(+)(out). It carries out the reaction a plastoquinone + NADPH + (n+1) H(+)(in) = a plastoquinol + NADP(+) + n H(+)(out). Its function is as follows. NDH shuttles electrons from NAD(P)H:plastoquinone, via FMN and iron-sulfur (Fe-S) centers, to quinones in the photosynthetic chain and possibly in a chloroplast respiratory chain. The immediate electron acceptor for the enzyme in this species is believed to be plastoquinone. Couples the redox reaction to proton translocation, and thus conserves the redox energy in a proton gradient. The polypeptide is NAD(P)H-quinone oxidoreductase subunit I, chloroplastic (Chloranthus spicatus (Chulantree)).